The chain runs to 312 residues: Protein phosphatase 2A catalytic subunit B (312 aa).

The Mn(2+) site is built by Asp-55, His-57, Asp-83, and Asn-115. His-116 serves as the catalytic Proton donor. 2 residues coordinate Mn(2+): His-165 and His-240.

It belongs to the PPP phosphatase family. PP-2A subfamily. Component of the Sca1 complex composed of at least gefA, gefH, scaA, phr, and the protein phosphatase 2A subunits pppA and pho2B. Mn(2+) serves as cofactor.

Its subcellular location is the cell membrane. It carries out the reaction O-phospho-L-seryl-[protein] + H2O = L-seryl-[protein] + phosphate. The enzyme catalyses O-phospho-L-threonyl-[protein] + H2O = L-threonyl-[protein] + phosphate. In terms of biological role, component of the Sca1 complex, a regulator of cell motility, chemotaxis and signal relay. The Sca1 complex is recruited to the plasma membrane in a chemoattractant- and F-actin-dependent manner and is enriched at the leading edge of chemotaxing cells where it regulates F-actin dynamics and signal relay by controlling the activation of rasC and the downstream target of rapamycin complex 2 (TORC2)-Akt/protein kinase B (PKB) pathway. The sequence is that of Protein phosphatase 2A catalytic subunit B from Dictyostelium discoideum (Social amoeba).